Consider the following 307-residue polypeptide: GMP synthase [glutamine-hydrolyzing] subunit B (307 aa).

A GMPS ATP-PPase domain is found at 1 to 184; sequence MWENFIEEKV…LGLPEKIYNR (184 aa). 27–33 is a binding site for ATP; that stretch reads SGGVDSS.

As to quaternary structure, heterodimer composed of a glutamine amidotransferase subunit (A) and a GMP-binding subunit (B).

It carries out the reaction XMP + L-glutamine + ATP + H2O = GMP + L-glutamate + AMP + diphosphate + 2 H(+). Its pathway is purine metabolism; GMP biosynthesis; GMP from XMP (L-Gln route): step 1/1. In terms of biological role, catalyzes the synthesis of GMP from XMP. In Thermococcus kodakarensis (strain ATCC BAA-918 / JCM 12380 / KOD1) (Pyrococcus kodakaraensis (strain KOD1)), this protein is GMP synthase [glutamine-hydrolyzing] subunit B.